The chain runs to 57 residues: uncharacterized protein (57 aa).

Residues 24 to 44 (LWVTLLLTMFFTAVEIIGGLI) traverse the membrane as a helical segment.

This sequence to cation A.eutrophus efflux system protein CzcD.

It is found in the cell membrane. This is an uncharacterized protein from Bacillus caldolyticus.